The chain runs to 357 residues: Homoserine kinase (357 aa).

It belongs to the GHMP kinase family. Homoserine kinase subfamily.

It carries out the reaction L-homoserine + ATP = O-phospho-L-homoserine + ADP + H(+). It participates in amino-acid biosynthesis; L-threonine biosynthesis; L-threonine from L-aspartate: step 4/5. In terms of biological role, commits homoserine to the threonine biosynthesis pathway by catalyzing its O-phosphorylation. The protein is Homoserine kinase of Cryptococcus neoformans var. grubii serotype A (strain H99 / ATCC 208821 / CBS 10515 / FGSC 9487) (Filobasidiella neoformans var. grubii).